Reading from the N-terminus, the 219-residue chain is Cytidylate kinase (219 aa).

21-29 (GPAASGKGT) provides a ligand contact to ATP.

This sequence belongs to the cytidylate kinase family. Type 1 subfamily.

The protein resides in the cytoplasm. The catalysed reaction is CMP + ATP = CDP + ADP. It catalyses the reaction dCMP + ATP = dCDP + ADP. In Rickettsia africae (strain ESF-5), this protein is Cytidylate kinase.